The sequence spans 219 residues: Izumo sperm-egg fusion protein 4 (219 aa).

Positions Met-1 to Ala-15 are cleaved as a signal peptide. A glycan (N-linked (GlcNAc...) asparagine) is linked at Asn-206.

This sequence belongs to the Izumo family.

The protein resides in the secreted. This is Izumo sperm-egg fusion protein 4 (IZUMO4) from Macaca fascicularis (Crab-eating macaque).